A 454-amino-acid polypeptide reads, in one-letter code: Kynurenine--oxoglutarate transaminase 3 (454 aa).

F2 bears the N-acetylserine mark. G71 lines the substrate pocket. K116 is subject to N6-acetyllysine; alternate. K116 is subject to N6-succinyllysine; alternate. N218 is a binding site for substrate. K280 bears the N6-(pyridoxal phosphate)lysine mark. R429 serves as a coordination point for substrate.

This sequence belongs to the class-I pyridoxal-phosphate-dependent aminotransferase family. As to quaternary structure, homodimer. It depends on pyridoxal 5'-phosphate as a cofactor.

It catalyses the reaction L-kynurenine + 2-oxoglutarate = kynurenate + L-glutamate + H2O. The catalysed reaction is L-kynurenine + glyoxylate = kynurenate + glycine + H2O. It carries out the reaction 3-hydroxy-L-kynurenine + glyoxylate = xanthurenate + glycine + H2O. The enzyme catalyses an S-substituted L-cysteine + H2O = a thiol + pyruvate + NH4(+). Its pathway is amino-acid degradation; L-kynurenine degradation; kynurenate from L-kynurenine: step 1/2. Catalyzes the irreversible transamination of the L-tryptophan metabolite L-kynurenine to form kynurenic acid (KA), an intermediate in the tryptophan catabolic pathway which is also a broad spectrum antagonist of the three ionotropic excitatory amino acid receptors among others. May catalyze the beta-elimination of S-conjugates and Se-conjugates of L-(seleno)cysteine, resulting in the cleavage of the C-S or C-Se bond. Has transaminase activity towards L-kynurenine, tryptophan, phenylalanine, serine, cysteine, methionine, histidine, glutamine and asparagine with glyoxylate as an amino group acceptor (in vitro). Has lower activity with 2-oxoglutarate as amino group acceptor (in vitro). This is Kynurenine--oxoglutarate transaminase 3 from Homo sapiens (Human).